The chain runs to 115 residues: uncharacterized protein (115 aa).

The tract at residues 9-30 (EGLRERGASGKNEQKKKKKEKI) is disordered.

This is an uncharacterized protein from Saccharomyces cerevisiae (strain ATCC 204508 / S288c) (Baker's yeast).